Consider the following 330-residue polypeptide: Probable integrase/recombinase protein MJ0367 (330 aa).

In terms of domain architecture, Core-binding (CB) spans 22–112; it reads IEETDKIKEY…LLKVFYRVLR (91 aa). The region spanning 136–325 is the Tyr recombinase domain; the sequence is QHYDAVDAEM…RAESLEFIKK (190 aa). Residues arginine 177, lysine 202, histidine 275, arginine 278, and histidine 301 contribute to the active site. Tyrosine 310 acts as the O-(3'-phospho-DNA)-tyrosine intermediate in catalysis.

It belongs to the 'phage' integrase family.

This chain is Probable integrase/recombinase protein MJ0367, found in Methanocaldococcus jannaschii (strain ATCC 43067 / DSM 2661 / JAL-1 / JCM 10045 / NBRC 100440) (Methanococcus jannaschii).